Consider the following 243-residue polypeptide: uncharacterized protein (243 aa).

This is an uncharacterized protein from Acanthamoeba polyphaga (Amoeba).